We begin with the raw amino-acid sequence, 698 residues long: Macrophomene synthase (698 aa).

Positions 21–340 (MEYMYSVPLD…SCDRYSSYRR (320 aa)) are terpene cyclase. Asp-113 is a Mg(2+) binding site. The DDXXD 1 signature appears at 113–117 (DNIAE). An NSE/DTE motif is present at residues 242 to 250 (NDFFSFNYE). A prenyltransferase region spans residues 341-696 (EKHQMELPIR…IQLALERLRI (356 aa)). The segment at 368 to 387 (LPNGKQLDAPTESSGKDLSD) is disordered. Isopentenyl diphosphate-binding residues include Lys-417, Arg-420, and His-449. The Mg(2+) site is built by Asp-456 and Asp-460. Residues 456-460 (DDIED) carry the DDXXD 2 motif. Arg-465 provides a ligand contact to dimethylallyl diphosphate. Arg-466 contacts isopentenyl diphosphate. Residues Lys-543, Thr-544, Gln-579, Asn-586, Lys-596, and Lys-606 each coordinate dimethylallyl diphosphate.

It in the N-terminal section; belongs to the terpene synthase family. The protein in the C-terminal section; belongs to the FPP/GGPP synthase family. Hexamer. It depends on Mg(2+) as a cofactor.

The enzyme catalyses 5 isopentenyl diphosphate + dimethylallyl diphosphate = all-trans-hexaprenyl diphosphate + 5 diphosphate. It catalyses the reaction all-trans-hexaprenyl diphosphate = macrophomene + diphosphate. In terms of biological role, bifunctional terpene synthase that converts dimethylallyl diphosphate (DMAPP) and isopentenyl diphosphate (IPP) into macrophomene as a single product. The C-terminal prenyltransferase (PT) domain of MpMS catalyzes formation of hexaprenyl diphosphate (HexPP), whereas the N-terminal terpene cyclase (TC) domain catalyzes the cyclization of HexPP to macrophomene. In Macrophomina phaseolina (strain MS6) (Charcoal rot fungus), this protein is Macrophomene synthase.